The chain runs to 338 residues: UPF0194 membrane protein in asrC 5'region (338 aa).

The N-terminal stretch at 1 to 23 (MAISPKKRALALVVVLIVAGAVA) is a signal peptide. A coiled-coil region spans residues 148–207 (KQSLDNAAAALKTARANLDRAQQALTLAIKGPRKEDIAAARQQLQADKAGLSLARRELTD).

Belongs to the UPF0194 family.

It is found in the periplasm. The chain is UPF0194 membrane protein in asrC 5'region from Acidithiobacillus ferridurans.